A 161-amino-acid chain; its full sequence is MADESGYDAGSDAGSDASLPSSEISFVEVKKPCEVCGSNANDHAIMTCFLCRDTREHIYCARVHLRSVPRMWICEECRMNPVVVNNVAPVDQEAAASSSRITYQVADSEVVNQTMTSSDSGNQISATHQQPPQAHASPVAVPMDTSSSDNQQPPSDSESAI.

A PHD-type zinc finger spans residues 30–80; it reads KKPCEVCGSNANDHAIMTCFLCRDTREHIYCARVHLRSVPRMWICEECRMN. Positions 33, 36, 48, 51, 57, 60, 74, and 77 each coordinate Zn(2+). Over residues 114-132 the composition is skewed to polar residues; it reads TMTSSDSGNQISATHQQPP. A disordered region spans residues 114–161; it reads TMTSSDSGNQISATHQQPPQAHASPVAVPMDTSSSDNQQPPSDSESAI. Residues 146–161 show a composition bias toward low complexity; the sequence is SSSDNQQPPSDSESAI.

Interacts directly with AIPP3/BDT1.

Functionally, together with AIPP3/BDT1, cooperates to form a BAH-PHD bivalent histone reader complex able to read histone H3 lysine 27 trimethylation (H3K27me3) histone marks in order to regulate transcription, especially to prevent early flowering; promotes AIPP3/BDT1 binding to H3K27me3. The sequence is that of PHD finger-containing protein 4 from Arabidopsis thaliana (Mouse-ear cress).